The sequence spans 370 residues: Gibberellin 2-beta-dioxygenase 2 (370 aa).

Residues 186–306 (DNDSLIRINH…RLSTIYFAAP (121 aa)) form the Fe2OG dioxygenase domain. Y196 lines the 2-oxoglutarate pocket. Fe cation-binding residues include H224, D226, and H287. 2-oxoglutarate contacts are provided by R297 and S299.

Belongs to the iron/ascorbate-dependent oxidoreductase family. GA2OX subfamily. Fe(2+) is required as a cofactor.

It catalyses the reaction gibberellin A1 + 2-oxoglutarate + O2 = gibberellin A8 + succinate + CO2. Its function is as follows. Catalyzes the 2-beta-hydroxylation of several biologically active gibberellins, leading to the homeostatic regulation of their endogenous level. Catabolism of gibberellins (GAs) plays a central role in plant development. The protein is Gibberellin 2-beta-dioxygenase 2 of Oryza sativa subsp. japonica (Rice).